A 455-amino-acid polypeptide reads, in one-letter code: Nucleoside-triphosphatase (455 aa).

E168 functions as the Proton acceptor in the catalytic mechanism.

This sequence belongs to the GDA1/CD39 NTPase family.

It localises to the nucleus. The enzyme catalyses a ribonucleoside 5'-triphosphate + H2O = a ribonucleoside 5'-diphosphate + phosphate + H(+). Its function is as follows. Might be involved in RNA transport out of nuclei. The polypeptide is Nucleoside-triphosphatase (Pisum sativum (Garden pea)).